A 507-amino-acid chain; its full sequence is Serine/threonine-protein kinase BSK11 (507 aa).

The N-myristoyl glycine moiety is linked to residue Gly-2. Residues Asp-16–Gly-26 show a composition bias toward basic and acidic residues. Residues Asp-16–Asn-44 form a disordered region. Basic residues predominate over residues Arg-27–Ala-41. Positions Asn-75 to Leu-332 constitute a Protein kinase domain. Residues Cys-81–Val-89 and Lys-106 each bind ATP. Catalysis depends on Asp-200, which acts as the Proton acceptor.

This sequence belongs to the protein kinase superfamily. Ser/Thr protein kinase family. As to quaternary structure, interacts with BRI1, ASK7/BIN2, BSK1, BSK6 and BSK8. In terms of processing, phosphorylated by BRI1, ASK7/BIN2 and ASK9/BIL2.

Its subcellular location is the cell membrane. It catalyses the reaction L-seryl-[protein] + ATP = O-phospho-L-seryl-[protein] + ADP + H(+). The enzyme catalyses L-threonyl-[protein] + ATP = O-phospho-L-threonyl-[protein] + ADP + H(+). Functionally, probable serine/threonine kinase that acts as a positive regulator of brassinosteroid (BR) signaling downstream of the receptor kinase BRI1. The sequence is that of Serine/threonine-protein kinase BSK11 from Arabidopsis thaliana (Mouse-ear cress).